A 211-amino-acid chain; its full sequence is Thiamine-phosphate synthase (211 aa).

4-amino-2-methyl-5-(diphosphooxymethyl)pyrimidine is bound by residues 36 to 40 (QLRDK) and asparagine 68. The Mg(2+) site is built by aspartate 69 and aspartate 88. Serine 107 contributes to the 4-amino-2-methyl-5-(diphosphooxymethyl)pyrimidine binding site. Position 133 to 135 (133 to 135 (TKS)) interacts with 2-[(2R,5Z)-2-carboxy-4-methylthiazol-5(2H)-ylidene]ethyl phosphate. Lysine 136 serves as a coordination point for 4-amino-2-methyl-5-(diphosphooxymethyl)pyrimidine. 2-[(2R,5Z)-2-carboxy-4-methylthiazol-5(2H)-ylidene]ethyl phosphate-binding positions include glycine 164 and 184-185 (IS).

The protein belongs to the thiamine-phosphate synthase family. It depends on Mg(2+) as a cofactor.

It catalyses the reaction 2-[(2R,5Z)-2-carboxy-4-methylthiazol-5(2H)-ylidene]ethyl phosphate + 4-amino-2-methyl-5-(diphosphooxymethyl)pyrimidine + 2 H(+) = thiamine phosphate + CO2 + diphosphate. The enzyme catalyses 2-(2-carboxy-4-methylthiazol-5-yl)ethyl phosphate + 4-amino-2-methyl-5-(diphosphooxymethyl)pyrimidine + 2 H(+) = thiamine phosphate + CO2 + diphosphate. It carries out the reaction 4-methyl-5-(2-phosphooxyethyl)-thiazole + 4-amino-2-methyl-5-(diphosphooxymethyl)pyrimidine + H(+) = thiamine phosphate + diphosphate. It participates in cofactor biosynthesis; thiamine diphosphate biosynthesis; thiamine phosphate from 4-amino-2-methyl-5-diphosphomethylpyrimidine and 4-methyl-5-(2-phosphoethyl)-thiazole: step 1/1. Functionally, condenses 4-methyl-5-(beta-hydroxyethyl)thiazole monophosphate (THZ-P) and 2-methyl-4-amino-5-hydroxymethyl pyrimidine pyrophosphate (HMP-PP) to form thiamine monophosphate (TMP). The protein is Thiamine-phosphate synthase of Halalkalibacterium halodurans (strain ATCC BAA-125 / DSM 18197 / FERM 7344 / JCM 9153 / C-125) (Bacillus halodurans).